We begin with the raw amino-acid sequence, 84 residues long: Small ribosomal subunit protein uS17 (84 aa).

Belongs to the universal ribosomal protein uS17 family. Part of the 30S ribosomal subunit.

Its function is as follows. One of the primary rRNA binding proteins, it binds specifically to the 5'-end of 16S ribosomal RNA. The sequence is that of Small ribosomal subunit protein uS17 from Clostridium acetobutylicum (strain ATCC 824 / DSM 792 / JCM 1419 / IAM 19013 / LMG 5710 / NBRC 13948 / NRRL B-527 / VKM B-1787 / 2291 / W).